The primary structure comprises 666 residues: Fructose-1,6-bisphosphatase class 3 (666 aa).

The protein belongs to the FBPase class 3 family. Mn(2+) serves as cofactor.

It catalyses the reaction beta-D-fructose 1,6-bisphosphate + H2O = beta-D-fructose 6-phosphate + phosphate. It functions in the pathway carbohydrate biosynthesis; gluconeogenesis. The sequence is that of Fructose-1,6-bisphosphatase class 3 from Parabacteroides distasonis (strain ATCC 8503 / DSM 20701 / CIP 104284 / JCM 5825 / NCTC 11152).